The sequence spans 96 residues: Co-chaperonin GroES (96 aa).

The protein belongs to the GroES chaperonin family. As to quaternary structure, heptamer of 7 subunits arranged in a ring. Interacts with the chaperonin GroEL.

It is found in the cytoplasm. In terms of biological role, together with the chaperonin GroEL, plays an essential role in assisting protein folding. The GroEL-GroES system forms a nano-cage that allows encapsulation of the non-native substrate proteins and provides a physical environment optimized to promote and accelerate protein folding. GroES binds to the apical surface of the GroEL ring, thereby capping the opening of the GroEL channel. This Acinetobacter baylyi (strain ATCC 33305 / BD413 / ADP1) protein is Co-chaperonin GroES.